A 441-amino-acid chain; its full sequence is UBX domain-containing protein 6 (441 aa).

Positions 1–10 are mediates interaction with LMAN1; that stretch reads MKKFFQEFKA. An N-acetylalanine modification is found at lysine 2. 2 disordered regions span residues 13–79 and 87–106; these read KFKS…QDTI and LQAE…NVVS. A compositionally biased stretch (basic and acidic residues) spans 22–36; it reads KLKESVGEKAHKEKP. The VCP/p97-interacting motif (VIM) stretch occupies residues 51–63; sequence EAQMAAAAALARL. Residues 52–61 show a composition bias toward low complexity; the sequence is AQMAAAAALA. Serine 96 is subject to Phosphoserine. One can recognise a PUB domain in the interval 175–244; the sequence is VDTIAKYLDN…DPEEFYVLSE (70 aa). The 77-residue stretch at 332–408 folds into the UBX domain; it reads RKYNYTLLRV…GLVPSALLTF (77 aa).

Interacts with VCP through the PUB domain (via C-terminus) and VIM motif (via N-terminus); the interaction is direct. Forms a ternary complex with CAV1 and VCP. Interacts with SYVN1. Interacts with HERPUD1. Interacts with VCPKMT. May interact with DERL1. Interacts with PLAA, VCP and YOD1; may form a complex involved in macroautophagy. Interacts with LMAN1. As to expression, enhanced expression in testis.

It localises to the cytoplasm. The protein localises to the cytosol. Its subcellular location is the membrane. The protein resides in the nucleus. It is found in the cytoskeleton. It localises to the microtubule organizing center. The protein localises to the centrosome. Its subcellular location is the early endosome membrane. The protein resides in the late endosome membrane. It is found in the lysosome membrane. Functionally, may negatively regulate the ATPase activity of VCP, an ATP-driven segregase that associates with different cofactors to control a wide variety of cellular processes. As a cofactor of VCP, it may play a role in the transport of CAV1 to lysosomes for degradation. It may also play a role in endoplasmic reticulum-associated degradation (ERAD) of misfolded proteins. Together with VCP and other cofactors, it may play a role in macroautophagy, regulating for instance the clearance of damaged lysosomes. In Homo sapiens (Human), this protein is UBX domain-containing protein 6.